Reading from the N-terminus, the 147-residue chain is UPF0306 protein YhbP (147 aa).

The protein belongs to the UPF0306 family.

This chain is UPF0306 protein YhbP, found in Escherichia coli O8 (strain IAI1).